Here is a 590-residue protein sequence, read N- to C-terminus: Mannosyl-oligosaccharide 1,2-alpha-mannosidase mans-2 (590 aa).

Topologically, residues 1–9 (MKTVRFNKQ) are cytoplasmic. Residues 10–30 (ALAILAACFIFLLCVVCYFSA) traverse the membrane as a helical; Signal-anchor for type II membrane protein segment. The Lumenal segment spans residues 31–590 (SSESHNAVVV…EAHPVPVLTN (560 aa)). A compositionally biased stretch (basic and acidic residues) spans 88 to 102 (PARVESKPPGEKTST). The tract at residues 88-112 (PARVESKPPGEKTSTEPEETGVGKA) is disordered. N-linked (GlcNAc...) asparagine glycans are attached at residues N156, N212, N373, and N402. A disulfide bond links C423 and C456. Residue E470 is the Proton donor of the active site. Ca(2+) is bound at residue T580.

It belongs to the glycosyl hydrolase 47 family. Ca(2+) serves as cofactor.

The protein localises to the membrane. It carries out the reaction N(4)-(alpha-D-Man-(1-&gt;2)-alpha-D-Man-(1-&gt;2)-alpha-D-Man-(1-&gt;3)-[alpha-D-Man-(1-&gt;2)-alpha-D-Man-(1-&gt;3)-[alpha-D-Man-(1-&gt;2)-alpha-D-Man-(1-&gt;6)]-alpha-D-Man-(1-&gt;6)]-beta-D-Man-(1-&gt;4)-beta-D-GlcNAc-(1-&gt;4)-beta-D-GlcNAc)-L-asparaginyl-[protein] (N-glucan mannose isomer 9A1,2,3B1,2,3) + 4 H2O = N(4)-(alpha-D-Man-(1-&gt;3)-[alpha-D-Man-(1-&gt;3)-[alpha-D-Man-(1-&gt;6)]-alpha-D-Man-(1-&gt;6)]-beta-D-Man-(1-&gt;4)-beta-D-GlcNAc-(1-&gt;4)-beta-D-GlcNAc)-L-asparaginyl-[protein] (N-glucan mannose isomer 5A1,2) + 4 beta-D-mannose. The catalysed reaction is N(4)-(alpha-D-Man-(1-&gt;2)-alpha-D-Man-(1-&gt;2)-alpha-D-Man-(1-&gt;3)-[alpha-D-Man-(1-&gt;3)-[alpha-D-Man-(1-&gt;2)-alpha-D-Man-(1-&gt;6)]-alpha-D-Man-(1-&gt;6)]-beta-D-Man-(1-&gt;4)-beta-D-GlcNAc-(1-&gt;4)-beta-D-GlcNAc)-L-asparaginyl-[protein] (N-glucan mannose isomer 8A1,2,3B1,3) + 3 H2O = N(4)-(alpha-D-Man-(1-&gt;3)-[alpha-D-Man-(1-&gt;3)-[alpha-D-Man-(1-&gt;6)]-alpha-D-Man-(1-&gt;6)]-beta-D-Man-(1-&gt;4)-beta-D-GlcNAc-(1-&gt;4)-beta-D-GlcNAc)-L-asparaginyl-[protein] (N-glucan mannose isomer 5A1,2) + 3 beta-D-mannose. The protein operates within protein modification; protein glycosylation. Involved in the maturation of Asn-linked oligosaccharides. Progressively trim alpha-1,2-linked mannose residues from Man(9)GlcNAc(2) to produce Man(5)GlcNAc(2). In Caenorhabditis elegans, this protein is Mannosyl-oligosaccharide 1,2-alpha-mannosidase mans-2.